The chain runs to 236 residues: Small ribosomal subunit protein uS2c (236 aa).

The protein belongs to the universal ribosomal protein uS2 family.

It is found in the plastid. Its subcellular location is the chloroplast. The sequence is that of Small ribosomal subunit protein uS2c (rps2) from Oenothera biennis (German evening primrose).